Reading from the N-terminus, the 261-residue chain is Global transcriptional regulator CodY (261 aa).

The GAF domain stretch occupies residues Met1–Leu159. A DNA-binding region (H-T-H motif) is located at residues Ala207–Arg226.

The protein belongs to the CodY family.

The protein resides in the cytoplasm. DNA-binding global transcriptional regulator which is involved in the adaptive response to starvation and acts by directly or indirectly controlling the expression of numerous genes in response to nutrient availability. During rapid exponential growth, CodY is highly active and represses genes whose products allow adaptation to nutrient depletion. In Streptococcus thermophilus (strain CNRZ 1066), this protein is Global transcriptional regulator CodY.